The sequence spans 239 residues: tRNA (guanine-N(1)-)-methyltransferase (239 aa).

Residues Gly109 and 133–138 (IGDYVL) contribute to the S-adenosyl-L-methionine site. Disordered regions lie at residues 163-187 (PASR…YTRP) and 217-239 (QRTR…DPGR). Basic and acidic residues-rich tracts occupy residues 165-180 (SRHD…RRLE) and 217-226 (QRTRERRPEL).

The protein belongs to the RNA methyltransferase TrmD family. In terms of assembly, homodimer.

It is found in the cytoplasm. It catalyses the reaction guanosine(37) in tRNA + S-adenosyl-L-methionine = N(1)-methylguanosine(37) in tRNA + S-adenosyl-L-homocysteine + H(+). In terms of biological role, specifically methylates guanosine-37 in various tRNAs. The sequence is that of tRNA (guanine-N(1)-)-methyltransferase from Mycolicibacterium paratuberculosis (strain ATCC BAA-968 / K-10) (Mycobacterium paratuberculosis).